Consider the following 256-residue polypeptide: Pimeloyl-[acyl-carrier protein] methyl ester esterase (256 aa).

The AB hydrolase-1 domain occupies 15–242 (HLVLLHGWGL…AAHAPFISHP (228 aa)). Residues Trp22, 82-83 (SL), and 143-147 (FLALQ) contribute to the substrate site. Residue Ser82 is the Nucleophile of the active site. Active-site residues include Asp207 and His235. His235 contributes to the substrate binding site.

This sequence belongs to the AB hydrolase superfamily. Carboxylesterase BioH family. In terms of assembly, monomer.

The protein localises to the cytoplasm. It carries out the reaction 6-carboxyhexanoyl-[ACP] methyl ester + H2O = 6-carboxyhexanoyl-[ACP] + methanol + H(+). It participates in cofactor biosynthesis; biotin biosynthesis. The physiological role of BioH is to remove the methyl group introduced by BioC when the pimeloyl moiety is complete. It allows to synthesize pimeloyl-ACP via the fatty acid synthetic pathway through the hydrolysis of the ester bonds of pimeloyl-ACP esters. The sequence is that of Pimeloyl-[acyl-carrier protein] methyl ester esterase from Escherichia coli (strain K12 / MC4100 / BW2952).